Here is a 400-residue protein sequence, read N- to C-terminus: Gap junction alpha-8 protein (400 aa).

The stretch at 2 to 12 (GDWSFLGNILE) is an intramembrane region. At 13 to 21 (QVNEQSTVI) the chain is on the cytoplasmic side. A helical membrane pass occupies residues 22–42 (GRVWLTVLFIFRILILGTAAE). Residues 43–71 (LVWGDEQSDFVCNTQQPGCENVCYDEAFP) lie on the Extracellular side of the membrane. Disulfide bonds link cysteine 54–cysteine 196, cysteine 61–cysteine 190, and cysteine 65–cysteine 185. A helical transmembrane segment spans residues 72–92 (ISHIRLWVLQIIFVSTPSLVY). Topologically, residues 93-156 (FGHAVHHVRM…GTLLRTYILH (64 aa)) are cytoplasmic. Positions 104–118 (EKRKEREEAERRQQA) are enriched in basic and acidic residues. The disordered stretch occupies residues 104 to 139 (EKRKEREEAERRQQAEVDEEKLPLAPNQNKGNNPDG). Positions 129–138 (PNQNKGNNPD) are enriched in polar residues. The chain crosses the membrane as a helical span at residues 157 to 177 (IIFKTLFEVGFIVGQYFLYGF). The Extracellular portion of the chain corresponds to 178–205 (RILPLYRCGRWPCPNLVDCFVSRPTEKT). A helical transmembrane segment spans residues 206-226 (IFIMFMLVVAAVSLFLNLVEI). The Cytoplasmic portion of the chain corresponds to 227–400 (SHLILKRIRR…SRARSDDLTV (174 aa)). Residues 323-400 (YAQAKEPEEE…SRARSDDLTV (78 aa)) are disordered. The span at 327–336 (KEPEEEKVKA) shows a compositional bias: basic and acidic residues. Acidic residues predominate over residues 337 to 346 (EEEEEQEEEQ). The residue at position 364 (serine 364) is a Phosphoserine; by CK2. The segment covering 381 to 392 (RSLSRLSKASSR) has biased composition (low complexity).

It belongs to the connexin family. Alpha-type (group II) subfamily. A hemichannel or connexon is composed of a hexamer of connexins. A functional gap junction is formed by the apposition of two hemichannels. Forms heteromeric channels with GJA3. During early stages of lens development, interacts with the C-terminus of MIP. Post-translationally, proteolytically cleaved by caspase-3 during lens development. Phosphorylated on Ser-364; which inhibits cleavage by caspase-3.

It is found in the cell membrane. It localises to the cell junction. The protein localises to the gap junction. Structural component of eye lens gap junctions. Gap junctions are dodecameric channels that connect the cytoplasm of adjoining cells. They are formed by the docking of two hexameric hemichannels, one from each cell membrane. Small molecules and ions diffuse from one cell to a neighboring cell via the central pore. The sequence is that of Gap junction alpha-8 protein (GJA8) from Gallus gallus (Chicken).